We begin with the raw amino-acid sequence, 379 residues long: Succinyl-diaminopimelate desuccinylase (379 aa).

His70 is a Zn(2+) binding site. Asp72 is an active-site residue. Zn(2+) is bound at residue Asp103. Residue Glu137 is the Proton acceptor of the active site. Zn(2+) is bound by residues Glu138, Glu166, and His352.

This sequence belongs to the peptidase M20A family. DapE subfamily. Homodimer. Requires Zn(2+) as cofactor. Co(2+) is required as a cofactor.

The catalysed reaction is N-succinyl-(2S,6S)-2,6-diaminopimelate + H2O = (2S,6S)-2,6-diaminopimelate + succinate. Its pathway is amino-acid biosynthesis; L-lysine biosynthesis via DAP pathway; LL-2,6-diaminopimelate from (S)-tetrahydrodipicolinate (succinylase route): step 3/3. Catalyzes the hydrolysis of N-succinyl-L,L-diaminopimelic acid (SDAP), forming succinate and LL-2,6-diaminopimelate (DAP), an intermediate involved in the bacterial biosynthesis of lysine and meso-diaminopimelic acid, an essential component of bacterial cell walls. In Burkholderia mallei (strain NCTC 10247), this protein is Succinyl-diaminopimelate desuccinylase.